Here is a 176-residue protein sequence, read N- to C-terminus: Inorganic pyrophosphatase (176 aa).

Substrate contacts are provided by Lys-31, Arg-45, and Tyr-57. Residues Asp-67, Asp-72, and Asp-104 each coordinate Mg(2+). Tyr-142 contributes to the substrate binding site.

This sequence belongs to the PPase family. As to quaternary structure, homohexamer. Mg(2+) serves as cofactor.

It localises to the cytoplasm. The enzyme catalyses diphosphate + H2O = 2 phosphate + H(+). Catalyzes the hydrolysis of inorganic pyrophosphate (PPi) forming two phosphate ions. This chain is Inorganic pyrophosphatase, found in Haemophilus influenzae (strain ATCC 51907 / DSM 11121 / KW20 / Rd).